The sequence spans 243 residues: MEISQQAGWCKKPASPMNTRAALEAVRNTAWTIVLLTSAAVMGASGISRVSANLGHSTVMTCPNRTNISMVTWKINPKTGHQCTLAYLIDKDSTGKNSCSDRINWRSRPDWDQALEIQQVGKADEGNYTCEVVNADGNFHYLYHLTVLVAPRMALYCDDHGNPVCEAETVKPAAEISWVPESNSTPRADSHGNGTVTVVSRFAARSTNGKNPTCIVSHATLNETRSINCSSRTLAQLPGGSAP.

Residues 1-29 lie on the Cytoplasmic side of the membrane; it reads MEISQQAGWCKKPASPMNTRAALEAVRNT. The chain crosses the membrane as a helical; Signal-anchor for type II membrane protein span at residues 30–47; that stretch reads AWTIVLLTSAAVMGASGI. The Ig-like V-type domain maps to 47-146; the sequence is ISRVSANLGH…GNFHYLYHLT (100 aa). Residues 48–243 lie on the Lumenal side of the membrane; the sequence is SRVSANLGHS…LAQLPGGSAP (196 aa). 2 disulfides stabilise this stretch: cysteine 62/cysteine 130 and cysteine 165/cysteine 214. 6 N-linked (GlcNAc...) asparagine glycosylation sites follow: asparagine 64, asparagine 67, asparagine 127, asparagine 193, asparagine 222, and asparagine 228. Positions 144-228 constitute an Ig-like C2-type domain; sequence HLTVLVAPRM…ATLNETRSIN (85 aa).

Belongs to the CD200R family. Expressed in peripheral blood lymphocytes (PBL) and peripheral blood mononuclear cells (PBMC).

Its subcellular location is the membrane. The chain is Cell surface glycoprotein CD200 receptor 1-B (CD200R1B) from Gallus gallus (Chicken).